Here is a 61-residue protein sequence, read N- to C-terminus: Protein translocase subunit SecE (61 aa).

Residues 38 to 58 (GIGMILIGTIGMIIRIIGYLV) traverse the membrane as a helical segment.

It belongs to the SecE/SEC61-gamma family. As to quaternary structure, component of the Sec protein translocase complex. Heterotrimer consisting of SecY (alpha), SecG (beta) and SecE (gamma) subunits. The heterotrimers can form oligomers, although 1 heterotrimer is thought to be able to translocate proteins. Interacts with the ribosome. May interact with SecDF, and other proteins may be involved.

Its subcellular location is the cell membrane. Functionally, essential subunit of the Sec protein translocation channel SecYEG. Clamps together the 2 halves of SecY. May contact the channel plug during translocation. The chain is Protein translocase subunit SecE from Thermococcus kodakarensis (strain ATCC BAA-918 / JCM 12380 / KOD1) (Pyrococcus kodakaraensis (strain KOD1)).